Reading from the N-terminus, the 231-residue chain is Ribose-5-phosphate isomerase A (231 aa).

Substrate contacts are provided by residues threonine 28–threonine 31, aspartate 83–aspartate 86, and lysine 96–glycine 99. The Proton acceptor role is filled by glutamate 105. Lysine 123 is a substrate binding site.

The protein belongs to the ribose 5-phosphate isomerase family. Homodimer.

The enzyme catalyses aldehydo-D-ribose 5-phosphate = D-ribulose 5-phosphate. It participates in carbohydrate degradation; pentose phosphate pathway; D-ribose 5-phosphate from D-ribulose 5-phosphate (non-oxidative stage): step 1/1. Functionally, catalyzes the reversible conversion of ribose-5-phosphate to ribulose 5-phosphate. The protein is Ribose-5-phosphate isomerase A of Parvibaculum lavamentivorans (strain DS-1 / DSM 13023 / NCIMB 13966).